Here is a 235-residue protein sequence, read N- to C-terminus: MASLDRVKVLVLGDSGVGKSSLVHLLCQNQVLGNPSWTVGCSVDVRLHEYREGTPEEKTYYIELWDVGGSVGSASSVKSTRAVFYNAVNGIILVHDLTNKKSSQNLYRWSLEALNRDLQPTGVLVTNGDYDREQFADNQIPLLVIGTKLDQIPEAKRSEVLTRTAFLAEDFNAEEINLDCTNTRCLAAGSSNAVKLSRFFDKVIEKRYSREGNLIPGFSDRKRFAGGNFKSLHYD.

The small GTPase-like stretch occupies residues 1–235 (MASLDRVKVL…GGNFKSLHYD (235 aa)). GTP-binding positions include 16–21 (GVGKSS), 148–150 (KLD), and 179–180 (DC).

The protein belongs to the small GTPase superfamily. Rab family. In terms of assembly, homodimer.

Its function is as follows. Required for KRAS signaling regulation and modulation of cell proliferation. Regulator of KRAS prenylation, and probably prenylation of other small GTPases. Required for lymphocyte development and function. Not required for myeloid cell development. This is Rab-like protein 3 (rabl3) from Xenopus tropicalis (Western clawed frog).